The chain runs to 258 residues: UPF0758 protein Bamb_2548 (258 aa).

The tract at residues Met-1–His-43 is disordered. A compositionally biased stretch (basic residues) spans Arg-31–His-43. In terms of domain architecture, MPN spans Gln-136–Leu-258. His-207, His-209, and Asp-220 together coordinate Zn(2+). Positions His-207–Asp-220 match the JAMM motif motif.

The protein belongs to the UPF0758 family.

The sequence is that of UPF0758 protein Bamb_2548 from Burkholderia ambifaria (strain ATCC BAA-244 / DSM 16087 / CCUG 44356 / LMG 19182 / AMMD) (Burkholderia cepacia (strain AMMD)).